Consider the following 536-residue polypeptide: 2-isopropylmalate synthase (536 aa).

Residues 8-269 (IIIFDTTLRD…YYNPFLGRPV (262 aa)) form the Pyruvate carboxyltransferase domain. Mn(2+)-binding residues include Asp-17, His-208, His-210, and Asn-244. The interval 408-536 (RLELVQVSCG…KEKAAVTSAS (129 aa)) is regulatory domain.

Belongs to the alpha-IPM synthase/homocitrate synthase family. LeuA type 1 subfamily. Homodimer. Requires Mn(2+) as cofactor.

The protein resides in the cytoplasm. It carries out the reaction 3-methyl-2-oxobutanoate + acetyl-CoA + H2O = (2S)-2-isopropylmalate + CoA + H(+). Its pathway is amino-acid biosynthesis; L-leucine biosynthesis; L-leucine from 3-methyl-2-oxobutanoate: step 1/4. In terms of biological role, catalyzes the condensation of the acetyl group of acetyl-CoA with 3-methyl-2-oxobutanoate (2-ketoisovalerate) to form 3-carboxy-3-hydroxy-4-methylpentanoate (2-isopropylmalate). In Gloeothece citriformis (strain PCC 7424) (Cyanothece sp. (strain PCC 7424)), this protein is 2-isopropylmalate synthase.